The primary structure comprises 714 residues: DNA ligase (714 aa).

NAD(+) contacts are provided by residues Asp47 to Asp51, Ser96 to Leu97, and Glu130. Lys132 functions as the N6-AMP-lysine intermediate in the catalytic mechanism. 4 residues coordinate NAD(+): Arg153, Glu190, Lys306, and Lys330. 4 residues coordinate Zn(2+): Cys435, Cys438, Cys453, and Cys459. The BRCT domain occupies Arg636–Gly714.

The protein belongs to the NAD-dependent DNA ligase family. LigA subfamily. It depends on Mg(2+) as a cofactor. Mn(2+) serves as cofactor.

The catalysed reaction is NAD(+) + (deoxyribonucleotide)n-3'-hydroxyl + 5'-phospho-(deoxyribonucleotide)m = (deoxyribonucleotide)n+m + AMP + beta-nicotinamide D-nucleotide.. In terms of biological role, DNA ligase that catalyzes the formation of phosphodiester linkages between 5'-phosphoryl and 3'-hydroxyl groups in double-stranded DNA using NAD as a coenzyme and as the energy source for the reaction. It is essential for DNA replication and repair of damaged DNA. The protein is DNA ligase of Nitrobacter hamburgensis (strain DSM 10229 / NCIMB 13809 / X14).